The primary structure comprises 920 residues: Glutamate receptor 2.2 (920 aa).

An N-terminal signal peptide occupies residues 1-24 (MKNSKLFFRFLFLFFFFCLESSRG). Topologically, residues 25 to 580 (QDNGKTQVNI…DKFSFLKPLS (556 aa)) are extracellular. Asn-53, Asn-204, Asn-267, Asn-331, Asn-342, Asn-477, and Asn-542 each carry an N-linked (GlcNAc...) asparagine glycan. Residues 581–601 (IELWLTTLVFFFLVGISVWTL) traverse the membrane as a helical segment. Residues 602–610 (EHRVNSDFR) are Cytoplasmic-facing. Residues 611 to 631 (GPANYQASTIFWFAFSTMVFA) traverse the membrane as a helical segment. The Cytoplasmic segment spans residues 632 to 635 (PRER). The helical transmembrane segment at 636-656 (VLSFGARSLVVTWYFVLLVLT) threads the bilayer. Topologically, residues 657 to 830 (QSYTASLASL…VTAIQLGVGS (174 aa)) are extracellular. Asn-702 is a glycosylation site (N-linked (GlcNAc...) asparagine). The helical transmembrane segment at 831–851 (FWFLFLVVFVVCVLALGKFTF) threads the bilayer. The Cytoplasmic portion of the chain corresponds to 852 to 920 (CFLWKTKGKD…QVNQTDPDCL (69 aa)).

This sequence belongs to the glutamate-gated ion channel (TC 1.A.10.1) family. In terms of assembly, may form heteromers. Expressed predominantly in roots.

It is found in the membrane. Glutamate-gated receptor that probably acts as a non-selective cation channel. May be involved in light-signal transduction and calcium homeostasis via the regulation of calcium influx into cells. In Arabidopsis thaliana (Mouse-ear cress), this protein is Glutamate receptor 2.2 (GLR2.2).